The chain runs to 426 residues: Putative acid phosphatase 1 (426 aa).

An N-terminal signal peptide occupies residues 1–18 (MRVLFYVFPFVIFALSQA). Over 19 to 388 (QLISVHVIFR…HNWTMTTVSW (370 aa)) the chain is Extracellular. His29 functions as the Nucleophile in the catalytic mechanism. Asn37 and Asn145 each carry an N-linked (GlcNAc...) asparagine glycan. A disulfide bond links Cys133 and Cys369. Asp276 (proton donor) is an active-site residue. Asn380 carries an N-linked (GlcNAc...) asparagine glycan. The chain crosses the membrane as a helical span at residues 389 to 409 (ILIGISAFLLIILIIMSYLAV). The Cytoplasmic segment spans residues 410–426 (RYKNRSVVTIKKVCLEN).

This sequence belongs to the histidine acid phosphatase family.

The protein localises to the membrane. It carries out the reaction a phosphate monoester + H2O = an alcohol + phosphate. This Caenorhabditis briggsae protein is Putative acid phosphatase 1.